We begin with the raw amino-acid sequence, 260 residues long: Methyl-coenzyme M reductase I subunit gamma (260 aa).

A coenzyme M-binding site is contributed by R123.

Belongs to the methyl-coenzyme M reductase gamma subunit family. MCR is a hexamer of two alpha, two beta, and two gamma chains, forming a dimer of heterotrimers. The cofactor is coenzyme F430.

The protein resides in the cytoplasm. The catalysed reaction is coenzyme B + methyl-coenzyme M = methane + coenzyme M-coenzyme B heterodisulfide. The protein operates within one-carbon metabolism; methyl-coenzyme M reduction; methane from methyl-coenzyme M: step 1/1. In terms of biological role, component of the methyl-coenzyme M reductase (MCR) I that catalyzes the reductive cleavage of methyl-coenzyme M (CoM-S-CH3 or 2-(methylthio)ethanesulfonate) using coenzyme B (CoB or 7-mercaptoheptanoylthreonine phosphate) as reductant which results in the production of methane and the mixed heterodisulfide of CoB and CoM (CoM-S-S-CoB). This is the final step in methanogenesis. The protein is Methyl-coenzyme M reductase I subunit gamma (mcrG) of Methanocaldococcus jannaschii (strain ATCC 43067 / DSM 2661 / JAL-1 / JCM 10045 / NBRC 100440) (Methanococcus jannaschii).